The chain runs to 874 residues: MTQLPHVRVDHMPQIRVLPVLPLDDAVVLPGMVVSLDMSDEQTRAAVDAARTGGSAGSSDARAPGISSRAAGRPAEVLLVPRVGGELAEVATVGVIEQVGRLPRGGSAAVVRGTARAQVGGVRPAPAGTDTTGTGTADATSGAGSGAGVQWVDAVVLDDSAATPFGALDDPAGTRAGSPADEAARVDKLAKEYRALVTDLLRQRGAWQVVDSVSAITDPGTLADTAGYSSYLTTAQKIELLGTPAVGTRLERLLTWTKEHLAEQDVAETIRRDVQEGMDRQQREFLLRRQLEAVRKELSELDGSGGGADGASGSEPADYRARVEAADLPEKVRAAALKEVDKLERTSDSSPEGGWIRTWLDTVLDLPWNVRAEDSYDIIAARAVLDADHAGLDDVKDRIIEHLAVRRRRADAGLGVVGGRRGGAVLALAGPPGVGKTSLGESIARAMGRSFVRVALGGVRDEAEIRGHRRTYVGALPGRIVRAIREAGSMNPVVLLDEVDKLGADYRGDPTAALLEVLDPEQNHTFRDHYLEVELDLSDVLFLATANVLEAIPAPLLDRMELIRLDGYTEDEKVVIARDHLLHRQLDRAGLAEGDVSVGDDALHALAGEYTREAGVRDLERSIARLLRKVVAQVALGAAALPVTIDAGDLTGYLGRPRHTPESAERTALPGVATGLAVTGAGGDVLFVEASLADAETGGGGITLTGQLGDVMKESAQIALSYLRSHGVELELPVGDLADRGVHVHVPAGAVPKDGPSAGVTMTTALASLLSGRPVRADVAMTGEVSLTGRVLPIGGVKQKLLAAHRAGLTTVLLPQRNGPDLDDVPAPVRDALTVHLVTDVREVLDLALEPAFDADHGGRSPGRAGHSPTALAA.

The region spanning 18 to 261 is the Lon N-terminal domain; sequence LPVLPLDDAV…RLLTWTKEHL (244 aa). Disordered stretches follow at residues 47-68, 120-144, and 298-318; these read VDAARTGGSAGSSDARAPGISS, GGVRPAPAGTDTTGTGTADATSGAG, and LSELDGSGGGADGASGSEPAD. Residues 124–142 show a composition bias toward low complexity; the sequence is PAPAGTDTTGTGTADATSG. Position 430–437 (430–437) interacts with ATP; the sequence is GPPGVGKT. The 185-residue stretch at 667-851 folds into the Lon proteolytic domain; the sequence is TALPGVATGL…REVLDLALEP (185 aa). Active-site residues include S757 and K800. Residues 853–874 form a disordered region; that stretch reads FDADHGGRSPGRAGHSPTALAA.

The protein belongs to the peptidase S16 family. In terms of assembly, homohexamer. Organized in a ring with a central cavity.

The protein resides in the cytoplasm. It catalyses the reaction Hydrolysis of proteins in presence of ATP.. Functionally, ATP-dependent serine protease that mediates the selective degradation of mutant and abnormal proteins as well as certain short-lived regulatory proteins. Required for cellular homeostasis and for survival from DNA damage and developmental changes induced by stress. Degrades polypeptides processively to yield small peptide fragments that are 5 to 10 amino acids long. Binds to DNA in a double-stranded, site-specific manner. The protein is Lon protease of Frankia alni (strain DSM 45986 / CECT 9034 / ACN14a).